The chain runs to 318 residues: Isoeugenol synthase 1 (318 aa).

NADP(+) contacts are provided by residues 10–13 (TGYI), 32–43 (ARPLTPDSTPSS), arginine 33, 84–86 (VPM), 109–111 (SEF), lysine 131, and 151–153 (NCF). Catalysis depends on lysine 131, which acts as the Proton donor/acceptor. Proline 260 is a substrate binding site.

This sequence belongs to the NmrA-type oxidoreductase family. As to expression, mostly expressed in petals, and, to a lower extent, in sepals, stamens and pistils.

The enzyme catalyses (E)-isoeugenol + acetate + NADP(+) = (E)-coniferyl acetate + NADPH. It participates in aromatic compound metabolism; phenylpropanoid biosynthesis. Functionally, catalyzes the synthesis of the phenylpropene isoeugenol from coniferyl acetate. Phenylpropenes are the primary constituents of various essential plant oils. They are produced as antimicrobial and antianimal compounds, or as floral attractants of pollinators. Isoeugenol is a characteristic aromatic constituent of spices and a floral volatile compound. The polypeptide is Isoeugenol synthase 1 (Clarkia breweri (Fairy fans)).